Consider the following 500-residue polypeptide: Endothelial lipase (500 aa).

The signal sequence occupies residues M1–G20. C64 and C77 are joined by a disulfide. N-linked (GlcNAc...) asparagine glycans are attached at residues N80 and N136. S169 serves as the catalytic Nucleophile. D193 acts as the Charge relay system in catalysis. A disulfide bridge links C252 with C272. The active-site Charge relay system is H274. 2 cysteine pairs are disulfide-bonded: C297–C316 and C308–C311. Residue K325–K337 coordinates heparin. In terms of domain architecture, PLAT spans Y347–K482. Residues N393, N469, and N491 are each glycosylated (N-linked (GlcNAc...) asparagine). C463 and C483 are disulfide-bonded.

The protein belongs to the AB hydrolase superfamily. Lipase family. In terms of assembly, head to tail homodimer. In terms of tissue distribution, high level of expression in the liver, placenta, lung, thyroid, kidney, testis and in the corpus luteum of the ovary. Expressed also in coronary artery endothelial cells, umbilical vein endothelial cells and in hepatocytes and osteosarcoma cell lines. Not detected in heart, brain and muscle.

The protein localises to the secreted. The enzyme catalyses a triacylglycerol + H2O = a diacylglycerol + a fatty acid + H(+). It carries out the reaction a 1,2-diacyl-sn-glycero-3-phosphocholine + H2O = a 2-acyl-sn-glycero-3-phosphocholine + a fatty acid + H(+). The catalysed reaction is 1,2,3-tri-(9Z-octadecenoyl)-glycerol + H2O = di-(9Z)-octadecenoylglycerol + (9Z)-octadecenoate + H(+). It catalyses the reaction 1,2,3-tributanoylglycerol + H2O = dibutanoylglycerol + butanoate + H(+). The enzyme catalyses 1,2-dihexadecanoyl-sn-glycero-3-phosphocholine + H2O = hexadecanoyl-sn-glycero-3-phosphocholine + hexadecanoate + H(+). With respect to regulation, inhibited by serum and NaCl. Its function is as follows. Exerts both phospholipase and triglyceride lipase activities. More active as a phospholipase than a triglyceride lipase. Hydrolyzes triglycerides, both with short-chain fatty acyl groups (tributyrin) and long-chain fatty acyl groups (triolein) with similar levels of activity toward both types of substrates. Hydrolyzes high density lipoproteins (HDL) more efficiently than other lipoproteins. This chain is Endothelial lipase (LIPG), found in Homo sapiens (Human).